We begin with the raw amino-acid sequence, 261 residues long: THO complex subunit THP2 (261 aa).

As to quaternary structure, component of the THO complex, which is composed of HPR1, MFT1, THO2 and THP2. Together with SUB2, TEX1 and YRA1, THO forms the transcription/export (TREX) complex. THO associates with DNA and RNA in vitro.

Its subcellular location is the nucleus. Functionally, component the THO subcomplex of the TREX complex, which operates in coupling transcription elongation to mRNA export. The THO complex is recruited to transcribed genes and moves along the gene with the elongating polymerase during transcription. THO is important for stabilizing nascent RNA in the RNA polymerase II elongation complex by preventing formation of DNA:RNA hybrids behind the elongating polymerase. It functions in cotranscriptional formation of an export-competent messenger ribonucleoprotein particle (mRNP) by facilitating the loading of ATP-dependent RNA helicase SUB2 and the mRNA export factor YRA1 along the nascent mRNA. The chain is THO complex subunit THP2 (THP2) from Saccharomyces cerevisiae (strain ATCC 204508 / S288c) (Baker's yeast).